Here is a 475-residue protein sequence, read N- to C-terminus: Deoxyguanosinetriphosphate triphosphohydrolase-like protein (475 aa).

Residues 118 to 272 (RLTHTLEVAQ…MDLSDDIAYS (155 aa)) form the HD domain.

It belongs to the dGTPase family. Type 2 subfamily.

The polypeptide is Deoxyguanosinetriphosphate triphosphohydrolase-like protein (dgt) (Bifidobacterium longum (strain NCC 2705)).